Consider the following 359-residue polypeptide: Peptide chain release factor 1 (359 aa).

At glutamine 236 the chain carries N5-methylglutamine.

Belongs to the prokaryotic/mitochondrial release factor family. Post-translationally, methylated by PrmC. Methylation increases the termination efficiency of RF1.

The protein localises to the cytoplasm. Its function is as follows. Peptide chain release factor 1 directs the termination of translation in response to the peptide chain termination codons UAG and UAA. The chain is Peptide chain release factor 1 from Streptococcus thermophilus (strain ATCC BAA-250 / LMG 18311).